The primary structure comprises 152 residues: Acidic phospholipase A2 S17-58 (152 aa).

The N-terminal stretch at 1 to 19 is a signal peptide; sequence MYPAHLLVLLAVCVSLLGA. A propeptide spanning residues 20-27 is cleaved from the precursor; that stretch reads SNIPLPSL. Disulfide bonds link Cys38–Cys104, Cys54–Cys151, Cys56–Cys72, Cys71–Cys132, Cys78–Cys125, Cys88–Cys118, and Cys111–Cys123. The Ca(2+) site is built by Tyr55, Gly57, and Gly59. His75 is an active-site residue. Position 76 (Asp76) interacts with Ca(2+). Residue Asp126 is part of the active site.

It belongs to the phospholipase A2 family. Group I subfamily. D49 sub-subfamily. Requires Ca(2+) as cofactor. Expressed by the venom gland.

It is found in the secreted. It catalyses the reaction a 1,2-diacyl-sn-glycero-3-phosphocholine + H2O = a 1-acyl-sn-glycero-3-phosphocholine + a fatty acid + H(+). In terms of biological role, snake venom phospholipase A2 (PLA2) that inhibits collagen-induced platelet aggregation. PLA2 catalyzes the calcium-dependent hydrolysis of the 2-acyl groups in 3-sn-phosphoglycerides. This Austrelaps superbus (Lowland copperhead snake) protein is Acidic phospholipase A2 S17-58.